Reading from the N-terminus, the 122-residue chain is Large ribosomal subunit protein uL14 (122 aa).

The protein belongs to the universal ribosomal protein uL14 family. In terms of assembly, part of the 50S ribosomal subunit. Forms a cluster with proteins L3 and L19. In the 70S ribosome, L14 and L19 interact and together make contacts with the 16S rRNA in bridges B5 and B8.

Its function is as follows. Binds to 23S rRNA. Forms part of two intersubunit bridges in the 70S ribosome. The polypeptide is Large ribosomal subunit protein uL14 (Ligilactobacillus salivarius (strain UCC118) (Lactobacillus salivarius)).